A 59-amino-acid chain; its full sequence is Large ribosomal subunit protein uL30 (59 aa).

It belongs to the universal ribosomal protein uL30 family. As to quaternary structure, part of the 50S ribosomal subunit.

This chain is Large ribosomal subunit protein uL30, found in Leptospira borgpetersenii serovar Hardjo-bovis (strain JB197).